Here is a 285-residue protein sequence, read N- to C-terminus: Alpha-acetolactate decarboxylase (285 aa).

A signal peptide spans 1-25 (MKKNIITSITSLALVAGLSLTAFAA).

This sequence belongs to the alpha-acetolactate decarboxylase family.

The catalysed reaction is (2S)-2-acetolactate + H(+) = (R)-acetoin + CO2. The protein operates within polyol metabolism; (R,R)-butane-2,3-diol biosynthesis; (R,R)-butane-2,3-diol from pyruvate: step 2/3. Converts acetolactate into acetoin, which can be excreted by the cells. This may be a mechanism for controlling the internal pH of cells in the stationary stage. In Brevibacillus brevis (Bacillus brevis), this protein is Alpha-acetolactate decarboxylase (aldB).